We begin with the raw amino-acid sequence, 355 residues long: Alanine racemase (355 aa).

The active-site Proton acceptor; specific for D-alanine is the lysine 34. N6-(pyridoxal phosphate)lysine is present on lysine 34. Substrate is bound at residue arginine 133. The active-site Proton acceptor; specific for L-alanine is tyrosine 249. Position 297 (methionine 297) interacts with substrate.

Belongs to the alanine racemase family. Pyridoxal 5'-phosphate is required as a cofactor.

It catalyses the reaction L-alanine = D-alanine. Its pathway is amino-acid biosynthesis; D-alanine biosynthesis; D-alanine from L-alanine: step 1/1. Functionally, catalyzes the interconversion of L-alanine and D-alanine. May also act on other amino acids. The polypeptide is Alanine racemase (alr) (Rickettsia conorii (strain ATCC VR-613 / Malish 7)).